The primary structure comprises 181 residues: 28 kDa heat- and acid-stable phosphoprotein (181 aa).

Over residues 1 to 14 (MPKGGRKGGHKGRA) the composition is skewed to basic residues. Positions 1–117 (MPKGGRKGGH…SRREREEIEK (117 aa)) are disordered. Thr-18 is modified (phosphothreonine). At Ser-19 the chain carries Phosphoserine. The span at 30 to 59 (EKQKAREEEEQKEGGDGAAGDPKKEKKSLD) shows a compositional bias: basic and acidic residues. A Glycyl lysine isopeptide (Lys-Gly) (interchain with G-Cter in SUMO2) cross-link involves residue Lys-52. 3 positions are modified to phosphoserine: Ser-57, Ser-60, and Ser-63. The span at 60-69 (SDESEDEEDD) shows a compositional bias: acidic residues. Position 70 is a phosphotyrosine (Tyr-70). Residues 102–117 (DGPKELSRREREEIEK) show a composition bias toward basic and acidic residues. Residue Lys-126 is modified to N6-methyllysine. An N6-acetyllysine mark is found at Lys-132 and Lys-164. The segment covering 151–167 (EEAARKKEEERKAKDDA) has biased composition (basic and acidic residues). Residues 151–181 (EEAARKKEEERKAKDDATLSGKRMQSLSLNK) are disordered. A phosphoserine mark is found at Ser-176 and Ser-178.

This sequence belongs to the PDAP1 family.

In terms of biological role, enhances PDGFA-stimulated cell growth in fibroblasts, but inhibits the mitogenic effect of PDGFB. The chain is 28 kDa heat- and acid-stable phosphoprotein (PDAP1) from Homo sapiens (Human).